We begin with the raw amino-acid sequence, 314 residues long: Homoserine kinase (314 aa).

95-105 (PHSRGLGSSAS) is an ATP binding site.

It belongs to the GHMP kinase family. Homoserine kinase subfamily.

It localises to the cytoplasm. The catalysed reaction is L-homoserine + ATP = O-phospho-L-homoserine + ADP + H(+). It functions in the pathway amino-acid biosynthesis; L-threonine biosynthesis; L-threonine from L-aspartate: step 4/5. Catalyzes the ATP-dependent phosphorylation of L-homoserine to L-homoserine phosphate. The chain is Homoserine kinase from Rhodococcus opacus (strain B4).